The chain runs to 622 residues: Cell pattern formation-associated protein stuA (622 aa).

2 disordered regions span residues 1–24 (MASMNQPQPYMDVHSHLSSGQTYA) and 62–81 (YPNSVASSQSVPPPTTSISS). The HTH APSES-type domain maps to 129–235 (RVTATLWEDE…QHISNLLYHP (107 aa)). The segment at residues 163–184 (GTKLLNVAGMTRGRRDGILKSE) is a DNA-binding region (H-T-H motif). Disordered stretches follow at residues 239 to 517 (NQRN…TPPR) and 549 to 622 (SNSG…SARR). Composition is skewed to polar residues over residues 274-283 (LQTPVPSHMS), 302-345 (ASAS…ARSM), and 355-370 (GNNLQGMQSYQPQSGY). The segment covering 384–395 (PQYAPQQPLPQQ) has biased composition (low complexity). Composition is skewed to polar residues over residues 404-421 (MPTSSYRDMAPPSSQRGS), 455-470 (SGYNTGRGSYYTTNPS), 480-506 (QLTPDMTGSPQQNGSGRMTPRTSNTAP), and 549-563 (SNSGYSTGMNGSMGS). A nuclear localization domain region spans residues 565-590 (KRMRDDDDDRIVPPDSRGEFDTKRRK). The segment covering 566–586 (RMRDDDDDRIVPPDSRGEFDT) has biased composition (basic and acidic residues).

Belongs to the EFG1/PHD1/stuA family.

The protein resides in the nucleus. In terms of biological role, transcription factor that regulates asexual reproduction. Binds the StuA-response elements (StRE) with the consensus sequence 5'-(A/T)CGCG(T/A)N(A/C)-3' at the promoters of target genes. Required from the very earliest events of asexual reproduction until completion of conidiophore development, but is not specifically required for differentiation of conidia. Represses transcription of the abaA developmental regulatory gene and of the developmentally regulated awh11 gene. Controls the expression of the catalase-peroxidase gene cpeA. Plays an important role in cell wall biogenesis during the development by controlling the transcription level of fksA. This is Cell pattern formation-associated protein stuA from Emericella nidulans (strain FGSC A4 / ATCC 38163 / CBS 112.46 / NRRL 194 / M139) (Aspergillus nidulans).